The primary structure comprises 228 residues: UPF0758 protein CKR_0778 (228 aa).

The MPN domain maps to 106 to 228 (RICSPQDAAV…FISLKEKGIL (123 aa)). Residues histidine 177, histidine 179, and aspartate 190 each contribute to the Zn(2+) site. The JAMM motif motif lies at 177–190 (HNHPSGDPSPSNED).

This sequence belongs to the UPF0758 family.

In Clostridium kluyveri (strain NBRC 12016), this protein is UPF0758 protein CKR_0778.